Here is a 94-residue protein sequence, read N- to C-terminus: Pyrimidine/purine nucleoside phosphorylase (94 aa).

It belongs to the nucleoside phosphorylase PpnP family.

It carries out the reaction a purine D-ribonucleoside + phosphate = a purine nucleobase + alpha-D-ribose 1-phosphate. The enzyme catalyses adenosine + phosphate = alpha-D-ribose 1-phosphate + adenine. It catalyses the reaction cytidine + phosphate = cytosine + alpha-D-ribose 1-phosphate. The catalysed reaction is guanosine + phosphate = alpha-D-ribose 1-phosphate + guanine. It carries out the reaction inosine + phosphate = alpha-D-ribose 1-phosphate + hypoxanthine. The enzyme catalyses thymidine + phosphate = 2-deoxy-alpha-D-ribose 1-phosphate + thymine. It catalyses the reaction uridine + phosphate = alpha-D-ribose 1-phosphate + uracil. The catalysed reaction is xanthosine + phosphate = alpha-D-ribose 1-phosphate + xanthine. In terms of biological role, catalyzes the phosphorolysis of diverse nucleosides, yielding D-ribose 1-phosphate and the respective free bases. Can use uridine, adenosine, guanosine, cytidine, thymidine, inosine and xanthosine as substrates. Also catalyzes the reverse reactions. This Pseudomonas putida (strain ATCC 700007 / DSM 6899 / JCM 31910 / BCRC 17059 / LMG 24140 / F1) protein is Pyrimidine/purine nucleoside phosphorylase.